The chain runs to 319 residues: tRNA dimethylallyltransferase (319 aa).

Residue 9–16 (GPTAVGKS) participates in ATP binding. 11–16 (TAVGKS) is a binding site for substrate. The interval 39 to 42 (DSMQ) is interaction with substrate tRNA.

This sequence belongs to the IPP transferase family. As to quaternary structure, monomer. Mg(2+) is required as a cofactor.

It catalyses the reaction adenosine(37) in tRNA + dimethylallyl diphosphate = N(6)-dimethylallyladenosine(37) in tRNA + diphosphate. Its function is as follows. Catalyzes the transfer of a dimethylallyl group onto the adenine at position 37 in tRNAs that read codons beginning with uridine, leading to the formation of N6-(dimethylallyl)adenosine (i(6)A). This is tRNA dimethylallyltransferase from Thermobifida fusca (strain YX).